An 880-amino-acid polypeptide reads, in one-letter code: Interference hedgehog (880 aa).

The first 20 residues, 1 to 20, serve as a signal peptide directing secretion; the sequence is MPSIVSSLLLVVLLTSPLGA. Over 21 to 703 the chain is Extracellular; sequence IPVLYPSPPP…SHNETFSMSP (683 aa). Ig-like C2-type domains lie at 37–142, 154–235, 251–339, and 345–432; these read PGVR…TARL, PVTS…STSS, PYLL…FIQV, and PQIV…LQVT. 4 disulfide bridges follow: cysteine 60-cysteine 126, cysteine 172-cysteine 219, cysteine 275-cysteine 323, and cysteine 366-cysteine 414. 3 N-linked (GlcNAc...) asparagine glycosylation sites follow: asparagine 79, asparagine 102, and asparagine 208. The interval 435–468 is disordered; that stretch reads PIHSESTQQSDHNHSKANRGRRPAQMIPPSAPNV. N-linked (GlcNAc...) asparagine glycosylation is found at asparagine 447 and asparagine 467. 2 Fibronectin type-III domains span residues 462-570 and 578-673; these read PPSA…LQPG and VPEM…TQRP. Heparin-binding residues include arginine 498, lysine 504, lysine 506, and arginine 544. Residue asparagine 560 is glycosylated (N-linked (GlcNAc...) asparagine). The segment at 665–699 is disordered; it reads LKQGRTQRPMVSTTEEATLQTGVRDTTTPSHNETF. Polar residues predominate over residues 668-699; it reads GRTQRPMVSTTEEATLQTGVRDTTTPSHNETF. An N-linked (GlcNAc...) asparagine glycan is attached at asparagine 696. A helical membrane pass occupies residues 704–724; that stretch reads IVTGTIGGGAVLILFVVTTCL. Residues 725–880 lie on the Cytoplasmic side of the membrane; the sequence is CMWRRRNSRA…SSGSLNSVGV (156 aa). The tract at residues 797–880 is disordered; that stretch reads YFQRQPTYDY…SSGSLNSVGV (84 aa). Composition is skewed to low complexity over residues 827–839 and 864–880; these read RAGS…NNLN and SSRS…SVGV.

It belongs to the immunoglobulin superfamily. IHOG family. Homodimer. Heterotetramer; 2 iHog chains bind 2 hh chains when facilitated by heparin, heparin is required to promote high-affinity interactions between hh and iHog.

It is found in the membrane. Mediates response to the active Hedgehog (Hh) protein signal in embryos, functioning upstream or at the level of patched (ptc). The polypeptide is Interference hedgehog (Drosophila ananassae (Fruit fly)).